Consider the following 527-residue polypeptide: Putative WEB family protein At4g17210 (527 aa).

Disordered stretches follow at residues 1-28 (MAKIRTDAPVMPPETPPRSSEVGEIDTR) and 46-70 (FSKKQPPRLSSSSSSQSQDTTTDVS). The span at 55-68 (SSSSSSQSQDTTTD) shows a compositional bias: low complexity. Coiled coils occupy residues 95–159 (AAKA…YILI), 202–389 (SNKI…AKHM), and 436–513 (KKIR…EAHS).

The protein belongs to the WEB family.

This chain is Putative WEB family protein At4g17210, found in Arabidopsis thaliana (Mouse-ear cress).